A 129-amino-acid chain; its full sequence is Transcriptional activator protein (129 aa).

Residues 13 to 28 carry the Nuclear localization signal motif; sequence KAQHKIAKRRAVRRRR. The segment at 33 to 50 is a zinc-finger region; sequence CGCSIFLHINCADNGFTH. The disordered stretch occupies residues 73 to 109; that stretch reads IFQDTTRRGPVVHQNQDLPHPSPVQPQPTESIGSPQS. Position 109 is a phosphoserine; by host (Ser-109). Positions 115 to 129 are transactivation; the sequence is SLDDFDESFWADIFK.

It belongs to the geminiviridae transcriptional activator protein family. Monomer. Homodimer. Homooligomer. Self-interaction correlates with nuclear localization and efficient activation of transcription. Monomers suppress local silencing by interacting with and inactivating host adenosine kinase 2 (ADK2) in the cytoplasm. Interacts with and inhibits host SNF1 kinase. Binds to ssDNA. In terms of processing, phosphorylated at Ser-109 by A.thaliana KIN10.

It is found in the host nucleus. The protein resides in the host cytoplasm. Its function is as follows. Strong activator of the late viral genes promoters. Enhances the expression of the capsid protein and nuclear shuttle protein. Acts as a suppressor of RNA-mediated gene silencing, also known as post-transcriptional gene silencing (PTGS), a mechanism of plant viral defense that limits the accumulation of viral RNAs. Suppresses the host RNA silencing by inhibiting adenosine kinase 2 (ADK2), a kinase involved in a general methylation pathway. Also suppresses the host basal defense by interacting with and inhibiting SNF1 kinase, a key regulator of cell metabolism implicated in innate antiviral defense. Determines pathogenicity. This is Transcriptional activator protein from Cabbage leaf curl virus (isolate Jamaica) (CaLCuV).